The chain runs to 147 residues: Male-specific protein scotti (147 aa).

Positions 55–93 are disordered; sequence PQEPPLGVFPAQGGPNGPPRRRKKRSFYTMTKPTPPCQS. Residues 82–93 show a composition bias toward polar residues; it reads YTMTKPTPPCQS. N-linked (GlcNAc...) asparagine glycosylation is present at N128.

This sequence belongs to the male-specific scotti family. In terms of tissue distribution, expressed in primary spermatocytes and round spermatids. Low expression is seen in very short elongating cysts, but were detected at high levels in a few longer spermatid cysts.

Its function is as follows. Post-meiotically transcribed gene that has a role in late spermiogenesis; required for actin cone progression during spermatid individualization. This is Male-specific protein scotti from Drosophila melanogaster (Fruit fly).